A 351-amino-acid polypeptide reads, in one-letter code: Anthranilate phosphoribosyltransferase (351 aa).

5-phospho-alpha-D-ribose 1-diphosphate-binding positions include G80, 83-84 (GD), T88, 90-93 (NIST), 108-116 (KHGNRSITS), and S120. G80 contributes to the anthranilate binding site. Mg(2+) is bound at residue S92. N111 is an anthranilate binding site. R166 contacts anthranilate. Mg(2+) is bound by residues D229 and E230.

It belongs to the anthranilate phosphoribosyltransferase family. In terms of assembly, homodimer. The cofactor is Mg(2+).

It carries out the reaction N-(5-phospho-beta-D-ribosyl)anthranilate + diphosphate = 5-phospho-alpha-D-ribose 1-diphosphate + anthranilate. The protein operates within amino-acid biosynthesis; L-tryptophan biosynthesis; L-tryptophan from chorismate: step 2/5. Its function is as follows. Catalyzes the transfer of the phosphoribosyl group of 5-phosphorylribose-1-pyrophosphate (PRPP) to anthranilate to yield N-(5'-phosphoribosyl)-anthranilate (PRA). The chain is Anthranilate phosphoribosyltransferase from Chlorobaculum tepidum (strain ATCC 49652 / DSM 12025 / NBRC 103806 / TLS) (Chlorobium tepidum).